A 224-amino-acid polypeptide reads, in one-letter code: MTNIAQEILQTYLVAGTQDTGRENFLPILDQALQAGITCFQFRDKGPNSLPTDAMRSDYAKKAQALCRTYHVPFIIDDRLELALDLQADGLHVGQSDQPWPKIEVAKQHGLITGLSCHTAQEILSSHQQPALDYIGVGPIFPTNSKEDAKTPLGLAQLKAFTQLSQLPVVAIGGISLKNCQQVAETGVAGAAVISAITQAKNIPQAIQLLNQPWQSSEGNNHES.

4-amino-2-methyl-5-(diphosphooxymethyl)pyrimidine is bound by residues 41–45 (QFRDK) and D77. The Mg(2+) site is built by D78 and D97. S116 lines the 4-amino-2-methyl-5-(diphosphooxymethyl)pyrimidine pocket. 143 to 145 (TNS) provides a ligand contact to 2-[(2R,5Z)-2-carboxy-4-methylthiazol-5(2H)-ylidene]ethyl phosphate. K146 provides a ligand contact to 4-amino-2-methyl-5-(diphosphooxymethyl)pyrimidine. 2-[(2R,5Z)-2-carboxy-4-methylthiazol-5(2H)-ylidene]ethyl phosphate contacts are provided by residues G174 and 194 to 195 (IS).

It belongs to the thiamine-phosphate synthase family. Requires Mg(2+) as cofactor.

The catalysed reaction is 2-[(2R,5Z)-2-carboxy-4-methylthiazol-5(2H)-ylidene]ethyl phosphate + 4-amino-2-methyl-5-(diphosphooxymethyl)pyrimidine + 2 H(+) = thiamine phosphate + CO2 + diphosphate. It catalyses the reaction 2-(2-carboxy-4-methylthiazol-5-yl)ethyl phosphate + 4-amino-2-methyl-5-(diphosphooxymethyl)pyrimidine + 2 H(+) = thiamine phosphate + CO2 + diphosphate. The enzyme catalyses 4-methyl-5-(2-phosphooxyethyl)-thiazole + 4-amino-2-methyl-5-(diphosphooxymethyl)pyrimidine + H(+) = thiamine phosphate + diphosphate. Its pathway is cofactor biosynthesis; thiamine diphosphate biosynthesis; thiamine phosphate from 4-amino-2-methyl-5-diphosphomethylpyrimidine and 4-methyl-5-(2-phosphoethyl)-thiazole: step 1/1. In terms of biological role, condenses 4-methyl-5-(beta-hydroxyethyl)thiazole monophosphate (THZ-P) and 2-methyl-4-amino-5-hydroxymethyl pyrimidine pyrophosphate (HMP-PP) to form thiamine monophosphate (TMP). The sequence is that of Thiamine-phosphate synthase from Latilactobacillus sakei subsp. sakei (strain 23K) (Lactobacillus sakei subsp. sakei).